We begin with the raw amino-acid sequence, 819 residues long: Leucine--tRNA ligase (819 aa).

Residues 36 to 46 (PYPSGKIHMGH) carry the 'HIGH' region motif. Positions 586–590 (KMSKS) match the 'KMSKS' region motif. K589 is an ATP binding site.

It belongs to the class-I aminoacyl-tRNA synthetase family.

It localises to the cytoplasm. The catalysed reaction is tRNA(Leu) + L-leucine + ATP = L-leucyl-tRNA(Leu) + AMP + diphosphate. In Wolbachia pipientis subsp. Culex pipiens (strain wPip), this protein is Leucine--tRNA ligase.